A 264-amino-acid polypeptide reads, in one-letter code: Small ribosomal subunit protein eS1 (264 aa).

The protein belongs to the eukaryotic ribosomal protein eS1 family. As to quaternary structure, component of the small ribosomal subunit. Mature ribosomes consist of a small (40S) and a large (60S) subunit. The 40S subunit contains about 33 different proteins and 1 molecule of RNA (18S). The 60S subunit contains about 49 different proteins and 3 molecules of RNA (25S, 5.8S and 5S).

It localises to the cytoplasm. In Babesia bovis, this protein is Small ribosomal subunit protein eS1.